The following is a 540-amino-acid chain: Chaperonin GroEL 2 (540 aa).

ATP-binding positions include 29–32 (TLGP), 86–90 (DGTTT), Gly-413, and Asp-492. The disordered stretch occupies residues 521-540 (KPEKEKASVPGGGDMGGMDF). A compositionally biased stretch (gly residues) spans 530–540 (PGGGDMGGMDF).

It belongs to the chaperonin (HSP60) family. Forms a cylinder of 14 subunits composed of two heptameric rings stacked back-to-back. Interacts with the co-chaperonin GroES.

It is found in the secreted. Its subcellular location is the capsule. The protein resides in the cell surface. It localises to the cell wall. The enzyme catalyses ATP + H2O + a folded polypeptide = ADP + phosphate + an unfolded polypeptide.. Functionally, together with its co-chaperonin GroES, plays an essential role in assisting protein folding. The GroEL-GroES system forms a nano-cage that allows encapsulation of the non-native substrate proteins and provides a physical environment optimized to promote and accelerate protein folding. The protein is Chaperonin GroEL 2 of Mycobacterium tuberculosis (strain ATCC 25177 / H37Ra).